The sequence spans 363 residues: Branched-chain-amino-acid aminotransferase 2 (363 aa).

The residue at position 197 (Lys197) is an N6-(pyridoxal phosphate)lysine.

The protein belongs to the class-IV pyridoxal-phosphate-dependent aminotransferase family. Pyridoxal 5'-phosphate is required as a cofactor.

The catalysed reaction is L-leucine + 2-oxoglutarate = 4-methyl-2-oxopentanoate + L-glutamate. It catalyses the reaction L-isoleucine + 2-oxoglutarate = (S)-3-methyl-2-oxopentanoate + L-glutamate. The enzyme catalyses L-valine + 2-oxoglutarate = 3-methyl-2-oxobutanoate + L-glutamate. Its pathway is amino-acid biosynthesis; L-isoleucine biosynthesis; L-isoleucine from 2-oxobutanoate: step 4/4. The protein operates within amino-acid biosynthesis; L-leucine biosynthesis; L-leucine from 3-methyl-2-oxobutanoate: step 4/4. It participates in amino-acid biosynthesis; L-valine biosynthesis; L-valine from pyruvate: step 4/4. Its activity is regulated as follows. Inhibited by canaline. Functionally, transaminates branched-chain amino acids and ketoglutarate. This Bacillus subtilis (strain 168) protein is Branched-chain-amino-acid aminotransferase 2 (ilvK).